Reading from the N-terminus, the 479-residue chain is MKRLLLVLCYITLLAGCQKVVVEQEKTTPPLKPTQLIVGTLYGPQIYFTSGQGDSGYDYEMAERFANYLDLELKMKPFANISELYSAMHSGEIDIIAAGLADTPARREQFRLGPPLYRVNQVLVYRQGTPIPRSVDTLKGEITVTTDSSFVDTLTELQKSNPDLVWNQEKDKDAEELLTMIAAGEIPYTIADSTSLDINRRFMPELREGLVLKRKQPVVWLLPPTNSDKLMSELLSFWHIEKRSGTLAHLNEKYFAHVERFDYVDTRAFIRAIDNKLPKYQATFEKYAEGIDWRKLAATAYQESHWNPNARSPTGVRGLMMLTLPTAKQVGIKNRLDPYQSIKGGAKYLNSMLERLPDSIPESQRMWFALASYNIGLGHVEDARKLAQSQGLNPSAWRDVKSVLPLLQKRKYYQKTRYGYARGNEAVHYVDSIRRYYDTLVWIDNQNMLLELKQKPLQTAEAKETEEKPQTDAIQPQQP.

Positions 1–15 are cleaved as a signal peptide; sequence MKRLLLVLCYITLLA. Positions 16-258 are non-LT domain; that stretch reads GCQKVVVEQE…HLNEKYFAHV (243 aa). Residues 260–479 are LT domain; the sequence is RFDYVDTRAF…QTDAIQPQQP (220 aa). Residue E303 is part of the active site. Positions 457 to 479 are disordered; it reads LQTAEAKETEEKPQTDAIQPQQP. The segment covering 461-470 has biased composition (basic and acidic residues); sequence EAKETEEKPQ.

This sequence in the N-terminal section; belongs to the bacterial solute-binding protein 3 family. The protein in the C-terminal section; belongs to the transglycosylase Slt family.

It is found in the cell outer membrane. It catalyses the reaction Exolytic cleavage of the (1-&gt;4)-beta-glycosidic linkage between N-acetylmuramic acid (MurNAc) and N-acetylglucosamine (GlcNAc) residues in peptidoglycan, from either the reducing or the non-reducing ends of the peptidoglycan chains, with concomitant formation of a 1,6-anhydrobond in the MurNAc residue.. Its function is as follows. Murein-degrading enzyme that degrades murein glycan strands and insoluble, high-molecular weight murein sacculi, with the concomitant formation of a 1,6-anhydromuramoyl product. Lytic transglycosylases (LTs) play an integral role in the metabolism of the peptidoglycan (PG) sacculus. Their lytic action creates space within the PG sacculus to allow for its expansion as well as for the insertion of various structures such as secretion systems and flagella. The chain is Membrane-bound lytic murein transglycosylase F from Shewanella pealeana (strain ATCC 700345 / ANG-SQ1).